Reading from the N-terminus, the 121-residue chain is MNLKEIPVHDHFRETVAYDFCAPHHTYYFDKIFNQYKSAYQKPEKVDEGVQTTLRGDIKLEPFEKAVDRFRKQLSVARKLREENPDAESVDEEKERLELFQCVKVILGEDIWMEYVIQSGK.

This is an uncharacterized protein from Caenorhabditis elegans.